Consider the following 322-residue polypeptide: tRNA dimethylallyltransferase (322 aa).

An ATP-binding site is contributed by 19-26; that stretch reads GPTASGKT. 21-26 contributes to the substrate binding site; that stretch reads TASGKT. 3 interaction with substrate tRNA regions span residues 44-47, 168-172, and 255-260; these read DSAL, QRIQR, and RCVGYR.

This sequence belongs to the IPP transferase family. Monomer. Requires Mg(2+) as cofactor.

It catalyses the reaction adenosine(37) in tRNA + dimethylallyl diphosphate = N(6)-dimethylallyladenosine(37) in tRNA + diphosphate. Functionally, catalyzes the transfer of a dimethylallyl group onto the adenine at position 37 in tRNAs that read codons beginning with uridine, leading to the formation of N6-(dimethylallyl)adenosine (i(6)A). The polypeptide is tRNA dimethylallyltransferase (Cupriavidus necator (strain ATCC 17699 / DSM 428 / KCTC 22496 / NCIMB 10442 / H16 / Stanier 337) (Ralstonia eutropha)).